A 401-amino-acid chain; its full sequence is S-adenosylmethionine synthase (401 aa).

H16 is a binding site for ATP. Residue D18 participates in Mg(2+) binding. Residue E44 coordinates K(+). Residues E57 and Q109 each coordinate L-methionine. A flexible loop region spans residues 109–119 (QSAHIAQGVDA). ATP contacts are provided by residues 174–176 (DAK), D251, 257–258 (RK), A274, and K278. Position 251 (D251) interacts with L-methionine. K282 is an L-methionine binding site.

Belongs to the AdoMet synthase family. In terms of assembly, homotetramer; dimer of dimers. It depends on Mg(2+) as a cofactor. Requires K(+) as cofactor.

It localises to the cytoplasm. The enzyme catalyses L-methionine + ATP + H2O = S-adenosyl-L-methionine + phosphate + diphosphate. Its pathway is amino-acid biosynthesis; S-adenosyl-L-methionine biosynthesis; S-adenosyl-L-methionine from L-methionine: step 1/1. In terms of biological role, catalyzes the formation of S-adenosylmethionine (AdoMet) from methionine and ATP. The overall synthetic reaction is composed of two sequential steps, AdoMet formation and the subsequent tripolyphosphate hydrolysis which occurs prior to release of AdoMet from the enzyme. This chain is S-adenosylmethionine synthase, found in Novosphingobium aromaticivorans (strain ATCC 700278 / DSM 12444 / CCUG 56034 / CIP 105152 / NBRC 16084 / F199).